The primary structure comprises 53 residues: Small ribosomal subunit protein uS14 (53 aa).

Zn(2+) is bound by residues Cys-18, Cys-21, Cys-36, and Cys-39.

The protein belongs to the universal ribosomal protein uS14 family. Zinc-binding uS14 subfamily. Part of the 30S ribosomal subunit. Zn(2+) serves as cofactor.

Its function is as follows. Binds 16S rRNA, required for the assembly of 30S particles. This Thermoplasma volcanium (strain ATCC 51530 / DSM 4299 / JCM 9571 / NBRC 15438 / GSS1) protein is Small ribosomal subunit protein uS14.